We begin with the raw amino-acid sequence, 292 residues long: Mitochondrial ornithine transporter 1 (292 aa).

3 Solcar repeats span residues 11 to 97, 105 to 196, and 211 to 292; these read EGAI…CSKF, SPLG…VKKS, and SKIW…LSAL. 6 helical membrane-spanning segments follow: residues 14-34, 69-89, 104-124, 171-187, 213-233, and 267-287; these read ILDI…EFPF, FFQG…TLFV, VSPL…ASLV, GQSG…VAWF, IWEL…SIFP, and GLGI…YIFE.

The protein belongs to the mitochondrial carrier (TC 2.A.29) family.

The protein localises to the mitochondrion inner membrane. Functionally, required for arginine biosynthesis. Transports ornithine synthesized from glutamate in the mitochondrial matrix to the cytosol, where it is converted to arginine. The protein is Mitochondrial ornithine transporter 1 (ORT1) of Saccharomyces cerevisiae (strain ATCC 204508 / S288c) (Baker's yeast).